Consider the following 542-residue polypeptide: Formate--tetrahydrofolate ligase (542 aa).

An ATP-binding site is contributed by 53 to 60; the sequence is TPAGEGKT.

This sequence belongs to the formate--tetrahydrofolate ligase family.

The enzyme catalyses (6S)-5,6,7,8-tetrahydrofolate + formate + ATP = (6R)-10-formyltetrahydrofolate + ADP + phosphate. It participates in one-carbon metabolism; tetrahydrofolate interconversion. The sequence is that of Formate--tetrahydrofolate ligase from Thermotoga maritima (strain ATCC 43589 / DSM 3109 / JCM 10099 / NBRC 100826 / MSB8).